The chain runs to 115 residues: NADH-ubiquinone oxidoreductase chain 3 (115 aa).

The next 3 membrane-spanning stretches (helical) occupy residues 4 to 24, 55 to 75, and 84 to 104; these read LLVIAVNTILSLILITVAFWL, FFLVAITFLLFDLEIALLLPI, and INMVLPTALILLTILALGLAY.

This sequence belongs to the complex I subunit 3 family. As to quaternary structure, core subunit of respiratory chain NADH dehydrogenase (Complex I) which is composed of 45 different subunits. Interacts with TMEM186. Interacts with TMEM242.

The protein localises to the mitochondrion inner membrane. The catalysed reaction is a ubiquinone + NADH + 5 H(+)(in) = a ubiquinol + NAD(+) + 4 H(+)(out). Functionally, core subunit of the mitochondrial membrane respiratory chain NADH dehydrogenase (Complex I) which catalyzes electron transfer from NADH through the respiratory chain, using ubiquinone as an electron acceptor. Essential for the catalytic activity of complex I. The chain is NADH-ubiquinone oxidoreductase chain 3 from Ochrotomys nuttalli (Golden mouse).